The primary structure comprises 122 residues: NADH-quinone oxidoreductase subunit A (122 aa).

The next 3 membrane-spanning stretches (helical) occupy residues 10 to 30, 67 to 87, and 91 to 111; these read LIIF…LTAG, FALL…WAVV, and LGLF…IGLI.

This sequence belongs to the complex I subunit 3 family. In terms of assembly, NDH-1 is composed of 14 different subunits. Subunits NuoA, H, J, K, L, M, N constitute the membrane sector of the complex.

It is found in the cell membrane. It catalyses the reaction a quinone + NADH + 5 H(+)(in) = a quinol + NAD(+) + 4 H(+)(out). Functionally, NDH-1 shuttles electrons from NADH, via FMN and iron-sulfur (Fe-S) centers, to quinones in the respiratory chain. The immediate electron acceptor for the enzyme in this species is believed to be a menaquinone. Couples the redox reaction to proton translocation (for every two electrons transferred, four hydrogen ions are translocated across the cytoplasmic membrane), and thus conserves the redox energy in a proton gradient. The sequence is that of NADH-quinone oxidoreductase subunit A from Geobacillus kaustophilus (strain HTA426).